A 299-amino-acid chain; its full sequence is ATP phosphoribosyltransferase (299 aa).

Belongs to the ATP phosphoribosyltransferase family. Long subfamily. As to quaternary structure, equilibrium between an active dimeric form, an inactive hexameric form and higher aggregates. Interconversion between the various forms is largely reversible and is influenced by the natural substrates and inhibitors of the enzyme. Mg(2+) serves as cofactor.

The protein resides in the cytoplasm. It catalyses the reaction 1-(5-phospho-beta-D-ribosyl)-ATP + diphosphate = 5-phospho-alpha-D-ribose 1-diphosphate + ATP. The protein operates within amino-acid biosynthesis; L-histidine biosynthesis; L-histidine from 5-phospho-alpha-D-ribose 1-diphosphate: step 1/9. With respect to regulation, feedback inhibited by histidine. Catalyzes the condensation of ATP and 5-phosphoribose 1-diphosphate to form N'-(5'-phosphoribosyl)-ATP (PR-ATP). Has a crucial role in the pathway because the rate of histidine biosynthesis seems to be controlled primarily by regulation of HisG enzymatic activity. This is ATP phosphoribosyltransferase from Buchnera aphidicola subsp. Schlechtendalia chinensis.